Consider the following 160-residue polypeptide: Nucleotide-binding protein VP1617 (160 aa).

The protein belongs to the YajQ family.

Functionally, nucleotide-binding protein. The polypeptide is Nucleotide-binding protein VP1617 (Vibrio parahaemolyticus serotype O3:K6 (strain RIMD 2210633)).